Consider the following 328-residue polypeptide: Pleckstrin homology domain protein OPY1 (328 aa).

A disordered region spans residues 19 to 52; that stretch reads NLIKKPSTSQNKTPTAQSSSGNNGAADGAPQGYH. Residues 24–41 are compositionally biased toward polar residues; sequence PSTSQNKTPTAQSSSGNN. Positions 213-328 are required for targeting to the cell membrane; it reads AEHQVCSGIL…IRKKLKAENI (116 aa). In terms of domain architecture, PH spans 215-318; it reads HQVCSGILYT…WIINFKSGIL (104 aa).

Interacts with MSS4 (via N-terminus); to negatively regulate MSS4 kinase activity.

The protein localises to the cell membrane. It localises to the cytoplasm. Its function is as follows. Binds phosphatidylinositol 4,5-bisphosphate (PtdIns(4,5)P2/PIP2) at the cell membrane. Negatively regulates the activity of phosphatidylinositol 4-phosphate 5-kinase MSS4. The polypeptide is Pleckstrin homology domain protein OPY1 (OPY1) (Saccharomyces cerevisiae (strain ATCC 204508 / S288c) (Baker's yeast)).